Reading from the N-terminus, the 450-residue chain is Beclin-1 (450 aa).

At Met1 the chain carries N-acetylmethionine. 2 positions are modified to phosphoserine: Ser15 and Ser30. Residues 48-72 (TTAQAKPGETQEEETNSGEEPFIET) are disordered. Phosphoserine; by AMPK occurs at positions 90, 93, and 96. Positions 108 to 127 (TMENLSRRLKVTGDLFDIMS) match the BH3 motif. The segment at 112-159 (LSRRLKVTGDLFDIMSGQTDVDHPLCEECTDTLLDQLDTQLNVTENEC) is interaction with BCL2 and BCL2L1 isoform Bcl-X(L). Phosphothreonine; by DAPK1 is present on Thr119. A coiled-coil region spans residues 142–270 (DTLLDQLDTQ…LDKLKKTNVF (129 aa)). The evolutionary conserved domain (ECD) stretch occupies residues 245–450 (DELKSVENQM…AWVSSQFYNK (206 aa)). Residues Lys402 and Lys437 each participate in a glycyl lysine isopeptide (Lys-Gly) (interchain with G-Cter in ubiquitin) cross-link. A required for membrane-association region spans residues 425 to 450 (WTKALKFMLTNLKWGLAWVSSQFYNK).

The protein belongs to the beclin family. As to quaternary structure, a homodimeric form is proposed to exist; this metastable form readily transits to ATG14- or UVRAG-containing complexes with BECN1:UVRAG being more stable than BECN1:ATG14. Component of the PI3K (PI3KC3/PI3K-III/class III phosphatidylinositol 3-kinase) complex the core of which is composed of the catalytic subunit PIK3C3, the regulatory subunit PIK3R4 and BECN1 associating with additional regulatory/auxiliary subunits to form alternative complex forms. Alternative complex forms containing a fourth regulatory subunit in a mutually exclusive manner are PI3K complex I (PI3KC3-C1) containing ATG14, and PI3K complex II (PI3KC3-C2) containing UVRAG. PI3KC3-C1 displays a V-shaped architecture with PIK3R4 serving as a bridge between PIK3C3 and the ATG14:BECN1 subcomplex. Both, PI3KC3-C1 and PI3KC3-C2, can associate with further regulatory subunits, such as RUBCN, SH3GLB1/Bif-1 and AMBRA1. PI3KC3-C1 probably associates with PIK3CB. Forms a complex with PPP2CA and AMBRA1; AMBRA1 and BECN1 components of the complex regulate MYC stability via different pathways. Component of the complex, at least composed of LRPPRC, BECN1 and BCL2; the interactions prevent BECN1 from forming an autophagy-inducing complex with PIK3C3. Interacts with AMBRA1, GOPC, GRID2. Interacts with BCL2 and BCL2L1 isoform Bcl-X(L); the interaction inhibits BECN1 function in promoting autophagy by interfering with the formation of the PI3K complex. Interacts with cytosolic HMGB1; inhibits the interaction of BECN1 and BCL2 leading to promotion of autophagy. Interacts with USP10, USP13, VMP1, DAPK1, RAB39A. Interacts with the poly-Gln domain of ATXN3; the interaction causes deubiquitination at Lys-402 and stabilizes BECN1. Interacts with SLAMF1. Interacts with TRIM5; the interaction causes activation of BECN1 by causing its dissociation from its inhibitors BCL2 and TAB2. Interacts with active ULK1 (phosphorylated on 'Ser-317') and MEFV simultaneously. Interacts with WDR81 and WDR91; negatively regulates the PI3 kinase/PI3K activity associated with endosomal membranes. Interacts with LAPTM4B; competes with EGFR for LAPTM4B binding; regulates EGFR activity. Interacts with TRIM50. Interacts with TRIM16. Interacts with ATG14; this interaction is increased in the absence of TMEM39A. Interacts with WASHC1; preventing interaction with AMBRA1 and the DCX(AMBRA1) complex and subsequent ubiquitination. Interacts with TRIM17. Interacts with BCL2L10/BCL-B (via BH1 domain). Interacts with SH3BGRL. Interacts with IRGM; enhancing BECN1-interacting partners and influencing the composition of the BECN1 complex. Interacts with ARMC3. Interacts with LRPPRC. (Microbial infection) Interacts with human cytomegalovirus/HHV-5 protein TRS1. In terms of assembly, (Microbial infection) Interacts with murine gammaherpesvirus 68 M11. As to quaternary structure, (Microbial infection) Interacts with herpes simplex virus 1 (HHV-1) protein ICP34.5; this interaction antagonizes the host autophagy response. (Microbial infection) Interacts with Epstein-Barr virus protein BHRF1; this interaction inhibits BECN1-mediated autophagy induction. In terms of processing, phosphorylation at Thr-119 by DAPK1 reduces its interaction with BCL2 and BCL2L1 and promotes induction of autophagy. In response to autophagic stimuli, phosphorylated at serine residues by AMPK in an ATG14-dependent manner, and this phosphorylation is critical for maximally efficient autophagy. Post-translationally, polyubiquitinated by NEDD4, both with 'Lys-11'- and 'Lys-63'-linkages. 'Lys-11'-linked polyubiquitination leads to degradation and is enhanced when the stabilizing interaction partner VPS34 is depleted. Deubiquitinated by USP10 and USP13, leading to stabilize the PIK3C3/VPS34-containing complexes. Polyubiquitinated at Lys-402 with 'Lys-48'-linkages. 'Lys-48'-linked polyubiquitination of Lys-402 leads to degradation. Deubiquitinated by ATXN3, leading to stabilization. Ubiquitinated at Lys-437 via 'Lys-63'-linkage by the DCX(AMBRA1) complex, thereby increasing the association between BECN1 and PIK3C3 to promote PIK3C3 activity. 'Lys-48'-linked ubiquitination by RNF216 leads to proteasomal degradation and autophagy inhibition. Proteolytically processed by caspases including CASP8 and CASP3; the C-terminal fragments lack autophagy-inducing capacity and are proposed to induce apoptosis. Thus the cleavage is proposed to be an determinant to switch from autophagy to apoptosis pathways affecting cellular homeostasis including viral infections and survival of tumor cells. As to expression, ubiquitous.

Its subcellular location is the cytoplasm. The protein localises to the golgi apparatus. It is found in the trans-Golgi network membrane. It localises to the endosome membrane. The protein resides in the endoplasmic reticulum membrane. Its subcellular location is the mitochondrion membrane. The protein localises to the endosome. It is found in the cytoplasmic vesicle. It localises to the autophagosome. The protein resides in the mitochondrion. Its subcellular location is the nucleus. Plays a central role in autophagy. Acts as a core subunit of the PI3K complex that mediates formation of phosphatidylinositol 3-phosphate; different complex forms are believed to play a role in multiple membrane trafficking pathways: PI3KC3-C1 is involved in initiation of autophagosomes and PI3KC3-C2 in maturation of autophagosomes and endocytosis. Involved in regulation of degradative endocytic trafficking and required for the abscission step in cytokinesis, probably in the context of PI3KC3-C2. Essential for the formation of PI3KC3-C2 but not PI3KC3-C1 PI3K complex forms. Involved in endocytosis. May play a role in antiviral host defense. In terms of biological role, beclin-1-C 35 kDa localized to mitochondria can promote apoptosis; it induces the mitochondrial translocation of BAX and the release of proapoptotic factors. Functionally, (Microbial infection) Protects against infection by a neurovirulent strain of Sindbis virus. The polypeptide is Beclin-1 (BECN1) (Homo sapiens (Human)).